The following is an 870-amino-acid chain: Radial spoke head 10 homolog B (870 aa).

A compositionally biased stretch (basic and acidic residues) spans Met1 to Ala16. The tract at residues Met1 to Ala43 is disordered. The segment covering Arg17–Glu39 has biased composition (polar residues). MORN repeat units lie at residues Tyr86–Thr108, Tyr109–Lys131, Tyr132–Met154, Tyr155–Val177, Tyr179–Thr201, Tyr204–Ile226, Tyr227–Glu249, Tyr251–Ile273, Tyr284–Met306, and Tyr307–Val329. The disordered stretch occupies residues Asn674–Pro704. Basic and acidic residues predominate over residues His683–Ser692. Positions Ala693–Ser703 are enriched in low complexity. A coiled-coil region spans residues Lys784 to Arg811. The interval Val840–Lys870 is disordered.

As to quaternary structure, interacts with RSPH6A. Does not appear to be part of the axonemal radial spoke complexes 1 or 2.

The protein localises to the cytoplasm. It is found in the cytoskeleton. The protein resides in the cilium axoneme. It localises to the cell projection. Its subcellular location is the cilium. The protein localises to the flagellum. Functionally, may function as part of the axonemal radial spoke complex 3 (RS3). Radial spoke complexes are important for ciliary motility. The protein is Radial spoke head 10 homolog B (RSPH10B) of Homo sapiens (Human).